A 297-amino-acid polypeptide reads, in one-letter code: Probable endonuclease 4 (297 aa).

Positions 1–21 (MPEIGAHVSAAGGPQRAPERG) are disordered. Zn(2+)-binding residues include histidine 67, histidine 107, glutamate 145, aspartate 179, histidine 182, histidine 216, aspartate 229, histidine 231, and glutamate 261.

It belongs to the AP endonuclease 2 family. The cofactor is Zn(2+).

It catalyses the reaction Endonucleolytic cleavage to 5'-phosphooligonucleotide end-products.. Its function is as follows. Endonuclease IV plays a role in DNA repair. It cleaves phosphodiester bonds at apurinic or apyrimidinic (AP) sites, generating a 3'-hydroxyl group and a 5'-terminal sugar phosphate. This is Probable endonuclease 4 from Halorhodospira halophila (strain DSM 244 / SL1) (Ectothiorhodospira halophila (strain DSM 244 / SL1)).